Reading from the N-terminus, the 253-residue chain is Indole-3-glycerol phosphate synthase (253 aa).

It belongs to the TrpC family.

The catalysed reaction is 1-(2-carboxyphenylamino)-1-deoxy-D-ribulose 5-phosphate + H(+) = (1S,2R)-1-C-(indol-3-yl)glycerol 3-phosphate + CO2 + H2O. The protein operates within amino-acid biosynthesis; L-tryptophan biosynthesis; L-tryptophan from chorismate: step 4/5. This is Indole-3-glycerol phosphate synthase from Bacillus thuringiensis (strain Al Hakam).